The following is an 85-amino-acid chain: Colicin E3 immunity protein (85 aa).

Belongs to the cloacin immunity protein family. In terms of assembly, native colicin E3 is a 1:1 complex of A chain and protein B (Im3). Binds between the translocation and cytotoxic RNase domains of intact ColE3, blocking access to the 16S rRNA substrate. Forms a very tight 1:1 complex with the cytotoxic fragment (residues 456-551) of ColE3 (ceaC).

Functionally, the cognate immunity protein for colicin E3 (ColE3), protects cells which harbor the plasmid ColE3 against the toxic action of ColE3. This protein inhibits the 16S RNA hydrolyzing activity of ColE3 by binding with very high affinity to the C-terminal catalytic domain of ColE3. The sequence is that of Colicin E3 immunity protein from Escherichia coli.